Reading from the N-terminus, the 662-residue chain is Glycogen debranching enzyme (662 aa).

Asp338 serves as the catalytic Nucleophile. The active-site Proton donor is the Glu373.

Belongs to the glycosyl hydrolase 13 family.

The catalysed reaction is Hydrolysis of (1-&gt;6)-alpha-D-glucosidic linkages to branches with degrees of polymerization of three or four glucose residues in limit dextrin.. It participates in glycan degradation; glycogen degradation. Removes maltotriose and maltotetraose chains that are attached by 1,6-alpha-linkage to the limit dextrin main chain, generating a debranched limit dextrin. The sequence is that of Glycogen debranching enzyme from Yersinia enterocolitica serotype O:8 / biotype 1B (strain NCTC 13174 / 8081).